Reading from the N-terminus, the 539-residue chain is Chaperonin GroEL (539 aa).

Residues 29–32, 86–90, Gly-413, and Asp-492 contribute to the ATP site; these read TLGP and DGTTT.

Belongs to the chaperonin (HSP60) family. Forms a cylinder of 14 subunits composed of two heptameric rings stacked back-to-back. Interacts with the co-chaperonin GroES.

It localises to the cytoplasm. The catalysed reaction is ATP + H2O + a folded polypeptide = ADP + phosphate + an unfolded polypeptide.. Its function is as follows. Together with its co-chaperonin GroES, plays an essential role in assisting protein folding. The GroEL-GroES system forms a nano-cage that allows encapsulation of the non-native substrate proteins and provides a physical environment optimized to promote and accelerate protein folding. The sequence is that of Chaperonin GroEL from Fusobacterium nucleatum subsp. nucleatum (strain ATCC 25586 / DSM 15643 / BCRC 10681 / CIP 101130 / JCM 8532 / KCTC 2640 / LMG 13131 / VPI 4355).